The chain runs to 142 residues: Transcription antitermination protein NusB (142 aa).

It belongs to the NusB family.

Its function is as follows. Involved in transcription antitermination. Required for transcription of ribosomal RNA (rRNA) genes. Binds specifically to the boxA antiterminator sequence of the ribosomal RNA (rrn) operons. In Borreliella burgdorferi (strain ATCC 35210 / DSM 4680 / CIP 102532 / B31) (Borrelia burgdorferi), this protein is Transcription antitermination protein NusB.